We begin with the raw amino-acid sequence, 400 residues long: E3 ubiquitin-protein ligase RNF149 (400 aa).

Residues 1–32 (MAWRRREASVGARGVLALALLALALCVPGARG) form the signal peptide. N-linked (GlcNAc...) asparagine glycans are attached at residues asparagine 52 and asparagine 145. The PA domain occupies 67–175 (SSPKEGAHGL…PKGREILELV (109 aa)). The chain crosses the membrane as a helical span at residues 201–221 (VVFVAIAFITMMIISLAWLIF). An RING-type; atypical zinc finger spans residues 269 to 310 (CAVCIENFKVKDIIRILPCKHIFHRICIDPWLLDHRTCPMCK). The disordered stretch occupies residues 325-400 (DVQEMPAPES…SDSRHGGPIS (76 aa)). Position 345 is a phosphoserine (serine 345). The span at 356–368 (DSSPPSASPAESE) shows a compositional bias: low complexity. The span at 389-400 (GRSDSRHGGPIS) shows a compositional bias: basic and acidic residues.

The protein resides in the membrane. The catalysed reaction is S-ubiquitinyl-[E2 ubiquitin-conjugating enzyme]-L-cysteine + [acceptor protein]-L-lysine = [E2 ubiquitin-conjugating enzyme]-L-cysteine + N(6)-ubiquitinyl-[acceptor protein]-L-lysine.. The protein operates within protein modification; protein ubiquitination. In terms of biological role, E3 ubiquitin-protein ligase. Ubiquitinates BRAF, inducing its proteasomal degradation. The polypeptide is E3 ubiquitin-protein ligase RNF149 (RNF149) (Homo sapiens (Human)).